Reading from the N-terminus, the 146-residue chain is Snaclec mamushigin subunit beta (146 aa).

The first 23 residues, methionine 1 to alanine 23, serve as a signal peptide directing secretion. Disulfide bonds link cysteine 25/cysteine 36, cysteine 53/cysteine 142, and cysteine 119/cysteine 134. Positions tyrosine 32–lysine 143 constitute a C-type lectin domain.

As to quaternary structure, heterodimer of subunits alpha and beta; disulfide-linked. In terms of tissue distribution, expressed by the venom gland.

It localises to the secreted. Binds to platelet GPIbalpha (GP1BA) and enhances platelet aggregation at low-shear stress. At high-shear stress, blocks platelet aggregation in a dose-dependent manner. The polypeptide is Snaclec mamushigin subunit beta (Gloydius blomhoffii (Mamushi)).